A 629-amino-acid chain; its full sequence is uncharacterized protein (629 aa).

An ABC transporter 1 domain is found at 4–255; that stretch reads LKAENLYKTY…KRAEREAQAE (252 aa). Residue 36–43 coordinates ATP; that stretch reads GPNGTGKS. Residues 284-304 form a disordered region; it reads KARIDRVETLKEQTGPQSSGS. Positions 285–294 are enriched in basic and acidic residues; that stretch reads ARIDRVETLK. The segment covering 295–304 has biased composition (polar residues); the sequence is EQTGPQSSGS. The ABC transporter 2 domain maps to 319 to 537; that stretch reads IEAENVMIAY…EESKAKKAAP (219 aa). 351–358 is a binding site for ATP; sequence GPNGIGKT. Positions 530–555 are disordered; it reads SKAKKAAPKPAAEEKTAEAEPKKKRK. The span at 540–550 shows a compositional bias: basic and acidic residues; the sequence is AAEEKTAEAEP. Positions 560–629 form a coiled coil; it reads KDQLEWDGIE…LSLMIEELES (70 aa).

Belongs to the ABC transporter superfamily.

This is an uncharacterized protein from Bacillus subtilis (strain 168).